The following is a 321-amino-acid chain: tRNA(Ile)-lysidine synthase (321 aa).

An ATP-binding site is contributed by 20–25 (SGGADS).

This sequence belongs to the tRNA(Ile)-lysidine synthase family.

The protein resides in the cytoplasm. It catalyses the reaction cytidine(34) in tRNA(Ile2) + L-lysine + ATP = lysidine(34) in tRNA(Ile2) + AMP + diphosphate + H(+). Ligates lysine onto the cytidine present at position 34 of the AUA codon-specific tRNA(Ile) that contains the anticodon CAU, in an ATP-dependent manner. Cytidine is converted to lysidine, thus changing the amino acid specificity of the tRNA from methionine to isoleucine. The protein is tRNA(Ile)-lysidine synthase of Bordetella pertussis (strain Tohama I / ATCC BAA-589 / NCTC 13251).